A 404-amino-acid chain; its full sequence is Lipase lipl-3 (404 aa).

The N-terminal stretch at 1 to 20 (MCSSLCALLLVILAVHNVHA) is a signal peptide. N-linked (GlcNAc...) asparagine glycosylation occurs at Asn-65. The active-site Nucleophile is the Ser-168. The N-linked (GlcNAc...) asparagine glycan is linked to Asn-272. Residues Asp-344 and His-376 each act as charge relay system in the active site.

The protein belongs to the AB hydrolase superfamily. Lipase family.

The protein localises to the secreted. The protein resides in the lysosome lumen. In terms of biological role, lipase that, together with lipl-1, plays a role in the response to nutrient deprivation by controlling lipid metabolism. Specifically, involved in the breakdown of lipids during lipophagy, a process during which lipids contained in lipid droplets that have been delivered to lysosomes by autophagy are degraded. The sequence is that of Lipase lipl-3 from Caenorhabditis elegans.